A 573-amino-acid chain; its full sequence is Proline--tRNA ligase (573 aa).

Belongs to the class-II aminoacyl-tRNA synthetase family. ProS type 1 subfamily. Homodimer.

It localises to the cytoplasm. It carries out the reaction tRNA(Pro) + L-proline + ATP = L-prolyl-tRNA(Pro) + AMP + diphosphate. In terms of biological role, catalyzes the attachment of proline to tRNA(Pro) in a two-step reaction: proline is first activated by ATP to form Pro-AMP and then transferred to the acceptor end of tRNA(Pro). As ProRS can inadvertently accommodate and process non-cognate amino acids such as alanine and cysteine, to avoid such errors it has two additional distinct editing activities against alanine. One activity is designated as 'pretransfer' editing and involves the tRNA(Pro)-independent hydrolysis of activated Ala-AMP. The other activity is designated 'posttransfer' editing and involves deacylation of mischarged Ala-tRNA(Pro). The misacylated Cys-tRNA(Pro) is not edited by ProRS. This chain is Proline--tRNA ligase, found in Geobacter sp. (strain M21).